A 512-amino-acid chain; its full sequence is Cytochrome P450 72A11 (512 aa).

Residues 2–22 traverse the membrane as a helical segment; that stretch reads EISVASVTVSVAVVVVSWWVW. A heme-binding site is contributed by Cys-460.

The protein belongs to the cytochrome P450 family. Heme serves as cofactor.

The protein resides in the membrane. In Arabidopsis thaliana (Mouse-ear cress), this protein is Cytochrome P450 72A11 (CYP72A11).